A 500-amino-acid chain; its full sequence is MQKVCWPYFDPDFDNLGERIYGPPCRVYIDNDSIQDCTVVKVNSENKQGLLLEVVQILTDMNLIITKSYISSDGGWFMDVFHVKDEHGNKLTDKSVINHIKHAIGTSRRESDFIKASEANNNSLEPQLADHGEHTAIEMTGTDRPGLFSEIFAAFADLHCNVMEAHAWSHNARLACIAYVSDDNTHTPIDDPSRLASIEDHLSTVIRATADPASNSTHVGHKENETDGFLAGQGKGCMNSNMERRLHQLMLSVRDFDEPFCEPSSLSLLSSKLEYCDHKERKTTIVSIGNCEERGYSIVTVKSKDRRRLMFDTICTLVDMQYVIFHAALRSDGADAFQEYFIRHIDGRALNTEGEKERVIKCLEAAIERRVCEGVKLELCAENRVGLLSDITRVLRENGLTVVRADVETQGQKSLNAFYVRDISGNKIDMEFVESVKKEMRPIHLEVKNEDTKIDTVGSDEPTASASATPQRQPQPHRFSLGDILRSQMERLSLNFVPTK.

4 ACT domains span residues 39 to 121 (VVKV…EANN), 136 to 213 (AIEM…ADPA), 298 to 373 (IVTV…RVCE), and 376 to 459 (KLEL…TVGS). The interval 450–478 (EDTKIDTVGSDEPTASASATPQRQPQPHR) is disordered. Polar residues predominate over residues 462–474 (PTASASATPQRQP).

In terms of biological role, may bind amino acids. This is ACT domain-containing protein ACR2 from Arabidopsis thaliana (Mouse-ear cress).